The primary structure comprises 205 residues: Ras-related protein RABB1a (205 aa).

Residue 13 to 20 (GDTGVGKS) coordinates GTP. Residues 35 to 43 (HDLTIGVEF) carry the Effector region motif. Residues 61–65 (DTAGQ), 119–122 (NKCD), and 149–150 (SA) each bind GTP. Residues 179 to 205 (ANEPGITPGPFGGKDASSSQQRRGCCG) are disordered. Over residues 194 to 205 (ASSSQQRRGCCG) the composition is skewed to polar residues. 2 S-geranylgeranyl cysteine lipidation sites follow: cysteine 203 and cysteine 204.

The protein belongs to the small GTPase superfamily. Rab family.

The protein localises to the cell membrane. Functionally, intracellular vesicle trafficking and protein transport. The sequence is that of Ras-related protein RABB1a (RABB1A) from Arabidopsis thaliana (Mouse-ear cress).